The chain runs to 139 residues: Peptide methionine sulfoxide reductase MsrB (139 aa).

The 123-residue stretch at Thr-9 to Asp-131 folds into the MsrB domain. The Zn(2+) site is built by Cys-48, Cys-51, Cys-97, and Cys-100. The active-site Nucleophile is the Cys-120.

The protein belongs to the MsrB Met sulfoxide reductase family. Requires Zn(2+) as cofactor.

It catalyses the reaction L-methionyl-[protein] + [thioredoxin]-disulfide + H2O = L-methionyl-(R)-S-oxide-[protein] + [thioredoxin]-dithiol. The polypeptide is Peptide methionine sulfoxide reductase MsrB (Pectobacterium atrosepticum (strain SCRI 1043 / ATCC BAA-672) (Erwinia carotovora subsp. atroseptica)).